The primary structure comprises 207 residues: Uracil phosphoribosyltransferase (207 aa).

Residues Arg-77, Arg-102, and 129-137 contribute to the 5-phospho-alpha-D-ribose 1-diphosphate site; that span reads DPMLATGGS. Residues Ile-192 and 197–199 each bind uracil; that span reads GDA. Asp-198 is a 5-phospho-alpha-D-ribose 1-diphosphate binding site.

It belongs to the UPRTase family. The cofactor is Mg(2+).

The catalysed reaction is UMP + diphosphate = 5-phospho-alpha-D-ribose 1-diphosphate + uracil. The protein operates within pyrimidine metabolism; UMP biosynthesis via salvage pathway; UMP from uracil: step 1/1. Its activity is regulated as follows. Allosterically activated by GTP. In terms of biological role, catalyzes the conversion of uracil and 5-phospho-alpha-D-ribose 1-diphosphate (PRPP) to UMP and diphosphate. The polypeptide is Uracil phosphoribosyltransferase (Mycoplasma mobile (strain ATCC 43663 / 163K / NCTC 11711) (Mesomycoplasma mobile)).